The primary structure comprises 449 residues: Clusterin (449 aa).

Positions Met1–Gly22 are cleaved as a signal peptide. Residues Lys78 to Lys81 carry the Nuclear localization signal motif. N-linked (GlcNAc...) (complex) asparagine glycosylation is present at Asn86. 5 disulfides stabilise this stretch: Cys102-Cys313, Cys113-Cys305, Cys116-Cys302, Cys121-Cys295, and Cys129-Cys285. N-linked (GlcNAc...) asparagine glycosylation occurs at Asn103. Residue Ser133 is modified to Phosphoserine. N-linked (GlcNAc...) asparagine glycosylation is found at Asn145, Asn291, and Asn354. The N-linked (GlcNAc...) (complex) asparagine glycan is linked to Asn374. Ser396 carries the phosphoserine modification. The Nuclear localization signal signature appears at Arg443–Arg447.

It belongs to the clusterin family. As to quaternary structure, antiparallel disulfide-linked heterodimer of an alpha chain and a beta chain. Self-associates and forms higher oligomers. Interacts with a broad range of misfolded proteins, including APP, APOC2 and LYZ. Slightly acidic pH promotes interaction with misfolded proteins. Forms high-molecular weight oligomers upon interaction with misfolded proteins. Interacts with APOA1, LRP2, CLUAP1 and PON1. Interacts with the complement membrane attack complex. Interacts (via alpha chain) with XRCC6. Interacts with SYVN1, COMMD1, BTRC, CUL1 and with ubiquitin and SCF (SKP1-CUL1-F-box protein) E3 ubiquitin-protein ligase complexes. Interacts (via alpha chain) with BAX in stressed cells, where BAX undergoes a conformation change leading to association with the mitochondrial membrane. Does not interact with BAX in unstressed cells. Found in a complex with LTF, CLU, EPPIN and SEMG1. Interacts (immaturely glycosylated pre-secreted form) with HSPA5; this interaction promotes CLU stability and facilitates stress-induced CLU retrotranslocation from the secretory pathway to the mitochondria, thereby reducing stress-induced apoptosis by stabilizing mitochondrial membrane integrity. Interacts (isoform 4) with BCL2L1; this interaction releases and activates BAX and promotes cell death. Interacts with TGFBR2 and ACVR1. Interacts (secreted form) with STMN3; this interaction may act as an important modulator during neuronal differentiation. Interacts with VLDLR and LRP8. In terms of processing, proteolytically cleaved on its way through the secretory system, probably within the Golgi lumen. Proteolytic cleavage is not necessary for its chaperone activity. All non-secreted forms are not proteolytically cleaved. Chaperone activity of uncleaved forms is dependent on a non-reducing environment. Polyubiquitinated, leading to proteasomal degradation. Under cellular stress, the intracellular level of cleaved form is reduced due to proteasomal degradation. Post-translationally, extensively glycosylated with sulfated N-linked carbohydrates. About 30% of the protein mass is comprised of complex N-linked carbohydrate. Endoplasmic reticulum (ER) stress induces changes in glycosylation status and increases level of hypoglycosylated forms. Core carbohydrates are essential for chaperone activity. Non-secreted forms are hypoglycosylated or unglycosylated. In terms of tissue distribution, detected in blood plasma, cerebrospinal fluid, milk, seminal plasma and colon mucosa. Detected in the germinal center of colon lymphoid nodules and in colon parasympathetic ganglia of the Auerbach plexus (at protein level). Ubiquitous. Detected in brain, testis, ovary, liver and pancreas, and at lower levels in kidney, heart, spleen and lung.

The protein localises to the secreted. Its subcellular location is the cytoplasm. The protein resides in the nucleus. It localises to the mitochondrion membrane. It is found in the cytosol. The protein localises to the microsome. Its subcellular location is the endoplasmic reticulum. The protein resides in the mitochondrion. It localises to the perinuclear region. It is found in the cytoplasmic vesicle. The protein localises to the secretory vesicle. Its subcellular location is the chromaffin granule. In terms of biological role, functions as extracellular chaperone that prevents aggregation of non native proteins. Prevents stress-induced aggregation of blood plasma proteins. Inhibits formation of amyloid fibrils by APP, APOC2, B2M, CALCA, CSN3, SNCA and aggregation-prone LYZ variants (in vitro). Does not require ATP. Maintains partially unfolded proteins in a state appropriate for subsequent refolding by other chaperones, such as HSPA8/HSC70. Does not refold proteins by itself. Binding to cell surface receptors triggers internalization of the chaperone-client complex and subsequent lysosomal or proteasomal degradation. Protects cells against apoptosis and against cytolysis by complement: inhibits assembly of the complement membrane attack complex (MAC) by preventing polymerization of C9 pore component of the MAC complex. Intracellular forms interact with ubiquitin and SCF (SKP1-CUL1-F-box protein) E3 ubiquitin-protein ligase complexes and promote the ubiquitination and subsequent proteasomal degradation of target proteins. Promotes proteasomal degradation of COMMD1 and IKBKB. Modulates NF-kappa-B transcriptional activity. A mitochondrial form suppresses BAX-dependent release of cytochrome c into the cytoplasm and inhibit apoptosis. Plays a role in the regulation of cell proliferation. An intracellular form suppresses stress-induced apoptosis by stabilizing mitochondrial membrane integrity through interaction with HSPA5. Secreted form does not affect caspase or BAX-mediated intrinsic apoptosis and TNF-induced NF-kappa-B-activity. Secreted form act as an important modulator during neuronal differentiation through interaction with STMN3. Plays a role in the clearance of immune complexes that arise during cell injury. Its function is as follows. Does not affect caspase or BAX-mediated intrinsic apoptosis and TNF-induced NF-kappa-B-activity. Functionally, does not affect caspase or BAX-mediated intrinsic apoptosis and TNF-induced NF-kappa-B-activity. Promotes cell death through interaction with BCL2L1 that releases and activates BAX. This Homo sapiens (Human) protein is Clusterin.